Reading from the N-terminus, the 295-residue chain is Cytidine deaminase (295 aa).

CMP/dCMP-type deaminase domains follow at residues 48 to 168 (TDNQ…FGPS) and 187 to 295 (EDDD…YLSL). 89 to 91 (NME) contributes to the substrate binding site. Histidine 102 provides a ligand contact to Zn(2+). The active-site Proton donor is glutamate 104. Zn(2+) contacts are provided by cysteine 129 and cysteine 132.

The protein belongs to the cytidine and deoxycytidylate deaminase family. Homodimer. It depends on Zn(2+) as a cofactor.

The catalysed reaction is cytidine + H2O + H(+) = uridine + NH4(+). It catalyses the reaction 2'-deoxycytidine + H2O + H(+) = 2'-deoxyuridine + NH4(+). Its function is as follows. This enzyme scavenges exogenous and endogenous cytidine and 2'-deoxycytidine for UMP synthesis. The polypeptide is Cytidine deaminase (Vibrio vulnificus (strain CMCP6)).